The chain runs to 607 residues: (R)-limonene synthase 1, chloroplastic (607 aa).

The transit peptide at 1-52 directs the protein to the chloroplast; that stretch reads MSSCINPSTLATSVNGFKCLPLATNRAAIRIMAKNKPVQCLVSTKYDNLTVD. Mn(2+)-binding residues include Asp-343 and Asp-347. Residues Asp-343, Asp-347, Arg-485, Asp-488, and Lys-504 each coordinate substrate. Residues 343–347 carry the DDXXD motif motif; it reads DDIYD. Mn(2+) is bound at residue Asp-488.

The protein belongs to the terpene synthase family. Requires Mg(2+) as cofactor. The cofactor is Mn(2+).

Its subcellular location is the plastid. It is found in the chloroplast. It catalyses the reaction (2E)-geranyl diphosphate = (4R)-limonene + diphosphate. Its activity is regulated as follows. Inhibited by 2-fluorogeranyl diphosphate (FGPP) and 2-fluoroneryl diphosphate (FNPP). In terms of biological role, catalyzes the conversion of geranyl diphosphate to (+)-(4R)-limonene. Produces exclusively the (+)-enantiomer. Can use neryl diphosphate as substrate. Has no activity with farnesyl diphosphate. This Citrus sinensis (Sweet orange) protein is (R)-limonene synthase 1, chloroplastic.